The primary structure comprises 101 residues: MTVRILAVCGNGQGSSMIMRMKVDQFLTQSNIDHTVNSCAVGEYKSELSGADIIIASTHIAGEITVTGNKYVVGVRNMLSPADFGPKLLEVIKAHFPQDVK.

Positions 3–96 (VRILAVCGNG…KLLEVIKAHF (94 aa)) constitute a PTS EIIB type-2 domain. Cys9 acts as the Phosphocysteine intermediate in catalysis. Cys9 bears the Phosphocysteine mark.

Its subcellular location is the cytoplasm. The catalysed reaction is N(pros)-phospho-L-histidyl-[protein] + L-ascorbate(out) = L-ascorbate 6-phosphate(in) + L-histidyl-[protein]. Functionally, the phosphoenolpyruvate-dependent sugar phosphotransferase system (sugar PTS), a major carbohydrate active transport system, catalyzes the phosphorylation of incoming sugar substrates concomitantly with their translocation across the cell membrane. The enzyme II UlaABC PTS system is involved in ascorbate transport. This is Ascorbate-specific PTS system EIIB component (ulaB) from Shigella sonnei (strain Ss046).